The chain runs to 327 residues: Glycerol-3-phosphate dehydrogenase [NAD(P)+] (327 aa).

Trp-11, His-30, and Lys-103 together coordinate NADPH. Sn-glycerol 3-phosphate is bound by residues Lys-103, Gly-131, and Ser-133. Ala-135 contacts NADPH. 5 residues coordinate sn-glycerol 3-phosphate: Lys-186, Asp-243, Ser-253, Arg-254, and Asn-255. Lys-186 acts as the Proton acceptor in catalysis. Arg-254 serves as a coordination point for NADPH. 2 residues coordinate NADPH: Val-281 and Glu-283.

This sequence belongs to the NAD-dependent glycerol-3-phosphate dehydrogenase family.

The protein localises to the cytoplasm. The enzyme catalyses sn-glycerol 3-phosphate + NAD(+) = dihydroxyacetone phosphate + NADH + H(+). The catalysed reaction is sn-glycerol 3-phosphate + NADP(+) = dihydroxyacetone phosphate + NADPH + H(+). It functions in the pathway membrane lipid metabolism; glycerophospholipid metabolism. In terms of biological role, catalyzes the reduction of the glycolytic intermediate dihydroxyacetone phosphate (DHAP) to sn-glycerol 3-phosphate (G3P), the key precursor for phospholipid synthesis. The chain is Glycerol-3-phosphate dehydrogenase [NAD(P)+] from Wolbachia sp. subsp. Brugia malayi (strain TRS).